Here is a 122-residue protein sequence, read N- to C-terminus: Urocortin (122 aa).

Positions 1–25 (MIQRGRATLLVALLLLAQLRPESSQ) are cleaved as a signal peptide. Residues 26 to 80 (WSPAAAAATGVQDPNLRWSPGVRNQGGGVRALLLLLAERFPRRAGSEPAGERQRR) constitute a propeptide that is removed on maturation. Valine 120 bears the Valine amide mark.

It belongs to the sauvagine/corticotropin-releasing factor/urotensin I family. As to quaternary structure, interacts with CRHR1 and CRHR2 (via their N-terminal extracellular domain). As to expression, in the organ of Corti, detected in the inner hair cell region (at protein level). Expressed in skin (at protein level).

The protein localises to the secreted. Acts in vitro to stimulate the secretion of adrenocorticotropic hormone (ACTH). Binds with high affinity to CRF receptor types 1, 2-alpha, and 2-beta. Plays a role in the establishment of normal hearing thresholds. Reduces food intake and regulates ghrelin levels in gastric body and plasma. This is Urocortin (Ucn) from Mus musculus (Mouse).